The following is a 126-amino-acid chain: Fluoride-specific ion channel FluC (126 aa).

A run of 4 helical transmembrane segments spans residues 1 to 21 (MTAT…RFHA), 33 to 53 (AVFP…MGVL), 72 to 92 (VGVL…ALLV), and 97 to 117 (IGLA…GLFL). Positions 76 and 79 each coordinate Na(+).

This sequence belongs to the fluoride channel Fluc/FEX (TC 1.A.43) family.

The protein localises to the cell inner membrane. The catalysed reaction is fluoride(in) = fluoride(out). Na(+) is not transported, but it plays an essential structural role and its presence is essential for fluoride channel function. In terms of biological role, fluoride-specific ion channel. Important for reducing fluoride concentration in the cell, thus reducing its toxicity. In Novosphingobium aromaticivorans (strain ATCC 700278 / DSM 12444 / CCUG 56034 / CIP 105152 / NBRC 16084 / F199), this protein is Fluoride-specific ion channel FluC.